The sequence spans 126 residues: Large ribosomal subunit protein uL22 (126 aa).

Belongs to the universal ribosomal protein uL22 family. In terms of assembly, part of the 50S ribosomal subunit.

In terms of biological role, this protein binds specifically to 23S rRNA; its binding is stimulated by other ribosomal proteins, e.g. L4, L17, and L20. It is important during the early stages of 50S assembly. It makes multiple contacts with different domains of the 23S rRNA in the assembled 50S subunit and ribosome. Its function is as follows. The globular domain of the protein is located near the polypeptide exit tunnel on the outside of the subunit, while an extended beta-hairpin is found that lines the wall of the exit tunnel in the center of the 70S ribosome. This Bradyrhizobium sp. (strain BTAi1 / ATCC BAA-1182) protein is Large ribosomal subunit protein uL22.